The primary structure comprises 236 residues: Ribosome maturation protein SDO1 homolog (236 aa).

It belongs to the SDO1/SBDS family.

The protein is Ribosome maturation protein SDO1 homolog of Pyrococcus horikoshii (strain ATCC 700860 / DSM 12428 / JCM 9974 / NBRC 100139 / OT-3).